A 218-amino-acid polypeptide reads, in one-letter code: Cytidylate kinase (218 aa).

11 to 19 (GPGASGKGT) provides a ligand contact to ATP.

Belongs to the cytidylate kinase family. Type 1 subfamily.

The protein localises to the cytoplasm. It carries out the reaction CMP + ATP = CDP + ADP. The enzyme catalyses dCMP + ATP = dCDP + ADP. The chain is Cytidylate kinase from Neisseria meningitidis serogroup B (strain ATCC BAA-335 / MC58).